We begin with the raw amino-acid sequence, 322 residues long: uncharacterized protein (322 aa).

2 disordered regions span residues 1-51 (MARS…GAWA) and 107-130 (QERQ…DRPD). Positions 119-130 (LHLEPGNEDRPD) are enriched in basic and acidic residues.

As to expression, expressed in skin and fetal lung.

This is an uncharacterized protein from Homo sapiens (Human).